The chain runs to 412 residues: Divalent metal cation transporter MntH (412 aa).

Helical transmembrane passes span Leu-19–Ala-39, Ala-46–Ile-66, Val-94–Ile-114, Leu-122–Ile-142, Val-156–Gln-176, Ala-196–His-216, Ile-241–Phe-261, Val-290–Gly-310, Thr-329–Leu-349, Val-350–Phe-370, and Ile-389–Ala-409.

This sequence belongs to the NRAMP family.

It localises to the cell inner membrane. In terms of biological role, h(+)-stimulated, divalent metal cation uptake system. This Citrobacter koseri (strain ATCC BAA-895 / CDC 4225-83 / SGSC4696) protein is Divalent metal cation transporter MntH.